The sequence spans 189 residues: HTH-type transcriptional repressor AcnR (189 aa).

An HTH tetR-type domain is found at 10-70 (AERKVEILSG…EVAHEDMRKM (61 aa)). Positions 33-52 (TVARLEETIGKSRGAIFHHY) form a DNA-binding region, H-T-H motif. Citrate is bound by residues 79-80 (LI), Arg130, and Gln134. Residue Glu181 coordinates Mg(2+). Arg185 is a citrate binding site.

Homodimer.

Functionally, acnR negatively controls the expression of the aconitase gene acn. The chain is HTH-type transcriptional repressor AcnR from Corynebacterium jeikeium (strain K411).